Reading from the N-terminus, the 427-residue chain is Glutamate-1-semialdehyde 2,1-aminomutase (427 aa).

N6-(pyridoxal phosphate)lysine is present on lysine 265.

This sequence belongs to the class-III pyridoxal-phosphate-dependent aminotransferase family. HemL subfamily. In terms of assembly, homodimer. The cofactor is pyridoxal 5'-phosphate.

The protein resides in the cytoplasm. The catalysed reaction is (S)-4-amino-5-oxopentanoate = 5-aminolevulinate. It participates in porphyrin-containing compound metabolism; protoporphyrin-IX biosynthesis; 5-aminolevulinate from L-glutamyl-tRNA(Glu): step 2/2. This is Glutamate-1-semialdehyde 2,1-aminomutase from Pseudomonas syringae pv. syringae (strain B728a).